Reading from the N-terminus, the 353-residue chain is uncharacterized protein (353 aa).

Residues 267–287 (GLPLVVIEAMAFGLPIVAFNC) form a helical membrane-spanning segment.

It belongs to the glycosyltransferase group 1 family. Glycosyltransferase 4 subfamily.

The protein localises to the membrane. This is an uncharacterized protein from Haemophilus influenzae (strain ATCC 51907 / DSM 11121 / KW20 / Rd).